Reading from the N-terminus, the 179-residue chain is Large ribosomal subunit protein uL5 (179 aa).

Belongs to the universal ribosomal protein uL5 family. In terms of assembly, part of the 50S ribosomal subunit; part of the 5S rRNA/L5/L18/L25 subcomplex. Contacts the 5S rRNA and the P site tRNA. Forms a bridge to the 30S subunit in the 70S ribosome.

This is one of the proteins that bind and probably mediate the attachment of the 5S RNA into the large ribosomal subunit, where it forms part of the central protuberance. In the 70S ribosome it contacts protein S13 of the 30S subunit (bridge B1b), connecting the 2 subunits; this bridge is implicated in subunit movement. Contacts the P site tRNA; the 5S rRNA and some of its associated proteins might help stabilize positioning of ribosome-bound tRNAs. In Bdellovibrio bacteriovorus (strain ATCC 15356 / DSM 50701 / NCIMB 9529 / HD100), this protein is Large ribosomal subunit protein uL5.